The sequence spans 486 residues: Protein pleiotropic regulatory locus 1 (486 aa).

A disordered region spans residues 62–101 (EPVVSQPPRQPDRINEQPGPSNALSLAAPEGSKSTQKGAT). WD repeat units lie at residues 174 to 204 (GHLG…KIWD), 216 to 246 (GHIE…KCWD), 258 to 288 (GHLS…RVWD), 300 to 330 (GHDN…KFWD), 342 to 371 (HHKK…KKFS), 384 to 413 (QQKT…WFWD), and 433 to 463 (ESEA…KMWK). Short sequence motifs (DWD box) lie at residues 275–290 (LLTG…WDIR) and 317–332 (VVTG…WDLR). The interval 465–486 (DENATPETHPINFKPPKEIRRF) is disordered.

Belongs to the WD repeat PRL1/PRL2 family. Component of the multiprotein assembly MOS4-associated complex (MAC) at least composed of MOS4, CDC5, PRL1 and PRP19. Interacts with CDC5. Component of the CUL4-RBX1-DDB1-PRL1 E3 ubiquitin-protein ligase complex. Interacts with DDB1A through its DWD motif. Interacts with AKIN10, AKIN11 and PIPC. Interacts with KAP2.

It localises to the nucleus. The protein operates within protein modification; protein ubiquitination. In terms of biological role, pleiotropic regulator of glucose, stress and hormone responses. Also regulates cytochrome P450 CYP90A1/CPD. Coordinates the expression of hormone- and stress-related genes and genes related to cell wall modification and growth, leading to altered sugar-dependent growth and developmental responses. Component of the MAC complex that probably regulates defense responses through transcriptional control and thereby is essential for plant innate immunity. By suppressing the expression of several (1)O(2)-responsive genes, PRL1 seems to play a major role in modulating responses of plants to environmental changes by interconnecting (1)O(2)-mediated retrograde signaling with other signaling pathways. Acts as a negative regulator of SNF1-related protein kinases AKIN10 and AKIN11 via the inhibition of their interaction with SKP1/ASK1. Component of the CUL4-RBX1-DDB1-PRL1 E3 ubiquitin-protein ligase complex, PRL1 may function as the substrate recognition module within this complex, leading to the AKIN10 degradation. This Arabidopsis thaliana (Mouse-ear cress) protein is Protein pleiotropic regulatory locus 1 (PRL1).